Consider the following 198-residue polypeptide: Large ribosomal subunit protein bL25 (198 aa).

The protein belongs to the bacterial ribosomal protein bL25 family. CTC subfamily. As to quaternary structure, part of the 50S ribosomal subunit; part of the 5S rRNA/L5/L18/L25 subcomplex. Contacts the 5S rRNA. Binds to the 5S rRNA independently of L5 and L18.

Functionally, this is one of the proteins that binds to the 5S RNA in the ribosome where it forms part of the central protuberance. This chain is Large ribosomal subunit protein bL25, found in Lysinibacillus sphaericus (strain C3-41).